The sequence spans 98 residues: Protein translation factor SUI1 homolog (98 aa).

It belongs to the SUI1 family.

In Pyrococcus abyssi (strain GE5 / Orsay), this protein is Protein translation factor SUI1 homolog.